The primary structure comprises 70 residues: Conotoxin AbVIC (70 aa).

The N-terminal stretch at 1 to 17 (VLIIAVLFLTACQLTTA) is a signal peptide. Positions 18–41 (ETSSRGKQKHRALRSTDKNSKLTR) are excised as a propeptide. Residues 19–41 (TSSRGKQKHRALRSTDKNSKLTR) form a disordered region. Intrachain disulfides connect C43–C57, C50–C61, and C56–C68.

It belongs to the conotoxin O1 superfamily. Expressed by the venom duct.

It is found in the secreted. The sequence is that of Conotoxin AbVIC from Conus abbreviatus (Abbreviated cone).